Here is a 385-residue protein sequence, read N- to C-terminus: MALMAVNTRCLCLFLLCTITGHSLEIKVNPPQDFEILDPGLLGYLYLQWKPPVVMDNFKECKLEYELKYRNVDSDSWKTIITRNLIYKDGFDLNKGIEGKIRTHLSEHCTNGSEVQSPWTEASYGIADEGSLGTKIQDMKCIYYNWQYLVCSWKPGKTVHSDTNYTMFFWYEGLDHALQCADYLQDNEKNVGCKLSNLDSSDYKDFFIRVNGSSKLEPIRSSYMVFQLQNIVKPLPPEFLHISVENSIDIRMKWSTPGGPIPPSCYTYEIVVREDDISWESATDKNDMKLKRRANESEDLCFFVRCKINIYCADDGIWSEWSEEECWEGYTGPDSKIVFIVPVCLFFIFLLLLLCLIVEKEDPEPTLSLHVDLNKEMYAYEETLC.

An N-terminal signal peptide occupies residues 1–23 (MALMAVNTRCLCLFLLCTITGHS). Residues 24–336 (LEIKVNPPQD…WEGYTGPDSK (313 aa)) are Extracellular-facing. 3 consecutive Fibronectin type-III domains span residues 30 to 130 (PPQD…ADEG), 133 to 221 (GTKI…PIRS), and 236 to 334 (PPEF…TGPD). Cys-61 and Cys-109 are oxidised to a cystine. Asn-111 carries an N-linked (GlcNAc...) asparagine glycan. Residues Cys-141 and Cys-151 are joined by a disulfide bond. A glycan (N-linked (GlcNAc...) asparagine) is linked at Asn-164. A disulfide bridge connects residues Cys-180 and Cys-193. N-linked (GlcNAc...) asparagine glycans are attached at residues Asn-211 and Asn-295. Cys-265 and Cys-312 are oxidised to a cystine. The WSXWS motif motif lies at 318 to 322 (WSEWS). The chain crosses the membrane as a helical span at residues 337 to 357 (IVFIVPVCLFFIFLLLLLCLI). Topologically, residues 358–385 (VEKEDPEPTLSLHVDLNKEMYAYEETLC) are cytoplasmic.

The protein belongs to the type I cytokine receptor family. Type 5 subfamily. As to quaternary structure, interacts with IL4RA. Interacts with high affinity to interleukin-13 (IL13), but not to interleukin-4 (IL4). In terms of processing, cleaved by MMP8 leading to a soluble form that is also able to interact with IL13.

It is found in the cell membrane. Cell surface receptor that plays a role in the regulation of IL-13-mediated responses. Functions as a decoy receptor that inhibits IL-13- and IL-4-mediated signal transduction via the JAK-STAT pathway and thereby modulates immune responses and inflammation. Serves as a functional signaling receptor for IL-13 in an alternative pathway involving AP-1 ultimately leading to the production of TGFB1. This is Interleukin-13 receptor subunit alpha-2 (Il13ra2) from Rattus norvegicus (Rat).